Consider the following 917-residue polypeptide: Spermatogenesis-associated protein 31D3 (917 aa).

The chain crosses the membrane as a helical span at residues 29–49 (FICLSGLGLFILYLFYMVLTL). Disordered regions lie at residues 55–80 (EKNN…KDRK), 152–195 (SVSP…PPPL), and 773–797 (SQET…LRSN). Over residues 63 to 74 (HQGRARRKRKSV) the composition is skewed to basic residues. Low complexity predominate over residues 152-163 (SVSPLASSASGA). Residues 164–177 (ESSFTLASTPSATT) show a composition bias toward polar residues. Residues 782–797 (LLHDPETSSEEDLRSN) show a composition bias toward basic and acidic residues.

The protein belongs to the SPATA31 family.

The protein localises to the membrane. Functionally, may play a role in spermatogenesis. The polypeptide is Spermatogenesis-associated protein 31D3 (SPATA31D3) (Homo sapiens (Human)).